Here is a 179-residue protein sequence, read N- to C-terminus: Large ribosomal subunit protein uL6 (179 aa).

Belongs to the universal ribosomal protein uL6 family. As to quaternary structure, part of the 50S ribosomal subunit.

This protein binds to the 23S rRNA, and is important in its secondary structure. It is located near the subunit interface in the base of the L7/L12 stalk, and near the tRNA binding site of the peptidyltransferase center. This chain is Large ribosomal subunit protein uL6, found in Acidothermus cellulolyticus (strain ATCC 43068 / DSM 8971 / 11B).